Consider the following 135-residue polypeptide: ATP synthase epsilon chain (135 aa).

Belongs to the ATPase epsilon chain family. In terms of assembly, F-type ATPases have 2 components, CF(1) - the catalytic core - and CF(0) - the membrane proton channel. CF(1) has five subunits: alpha(3), beta(3), gamma(1), delta(1), epsilon(1). CF(0) has three main subunits: a, b and c.

It is found in the cell inner membrane. In terms of biological role, produces ATP from ADP in the presence of a proton gradient across the membrane. The sequence is that of ATP synthase epsilon chain from Rhizobium rhizogenes (strain K84 / ATCC BAA-868) (Agrobacterium radiobacter).